Consider the following 31-residue polypeptide: Cytochrome b6-f complex subunit 6 (31 aa).

The helical transmembrane segment at 3-23 threads the bilayer; the sequence is LFIGYIIFLVAFFGLATGLFL.

Belongs to the PetL family. As to quaternary structure, the 4 large subunits of the cytochrome b6-f complex are cytochrome b6, subunit IV (17 kDa polypeptide, PetD), cytochrome f and the Rieske protein, while the 4 small subunits are PetG, PetL, PetM and PetN. The complex functions as a dimer.

Its subcellular location is the plastid. It is found in the chloroplast thylakoid membrane. Its function is as follows. Component of the cytochrome b6-f complex, which mediates electron transfer between photosystem II (PSII) and photosystem I (PSI), cyclic electron flow around PSI, and state transitions. PetL is important for photoautotrophic growth as well as for electron transfer efficiency and stability of the cytochrome b6-f complex. This is Cytochrome b6-f complex subunit 6 from Porphyra purpurea (Red seaweed).